The chain runs to 192 residues: Ion-translocating oxidoreductase complex subunit B (192 aa).

Residues 1–26 (MNAIWIAVAAVSLLGLAFGAILGYAS) form a hydrophobic region. The 4Fe-4S domain occupies 32–91 (EDDPVVEKIDEILPQSQCGQCGYPGCRPYAEAISCNGEKINRCAPGGEAVMLKIAELLNV). The [4Fe-4S] cluster site is built by Cys49, Cys52, Cys57, Cys74, Cys117, Cys120, Cys123, Cys127, Cys147, Cys150, Cys153, and Cys157. 2 consecutive 4Fe-4S ferredoxin-type domains span residues 108-137 (MVAV…GATR) and 138-167 (AMHT…LQPV).

Belongs to the 4Fe4S bacterial-type ferredoxin family. RnfB subfamily. As to quaternary structure, the complex is composed of six subunits: RsxA, RsxB, RsxC, RsxD, RsxE and RsxG. Requires [4Fe-4S] cluster as cofactor.

It is found in the cell inner membrane. In terms of biological role, part of a membrane-bound complex that couples electron transfer with translocation of ions across the membrane. Required to maintain the reduced state of SoxR. The polypeptide is Ion-translocating oxidoreductase complex subunit B (Escherichia coli O127:H6 (strain E2348/69 / EPEC)).